The chain runs to 419 residues: Probable pectate lyase C (419 aa).

The N-terminal stretch at M1 to A19 is a signal peptide. N48, N164, and N201 each carry an N-linked (GlcNAc...) asparagine glycan. Residue R204 is part of the active site. The 36-residue stretch at N261–M296 folds into the EF-hand domain. Positions 274, 276, 278, 280, and 285 each coordinate Ca(2+). A disordered region spans residues E350–S395. The segment covering S373–I386 has biased composition (acidic residues).

The protein belongs to the polysaccharide lyase 1 family. The cofactor is Ca(2+).

Its subcellular location is the secreted. It catalyses the reaction Eliminative cleavage of (1-&gt;4)-alpha-D-galacturonan to give oligosaccharides with 4-deoxy-alpha-D-galact-4-enuronosyl groups at their non-reducing ends.. Functionally, pectinolytic enzyme consist of four classes of enzymes: pectin lyase, polygalacturonase, pectin methylesterase and rhamnogalacturonase. Among pectinolytic enzymes, pectin lyase is the most important in depolymerization of pectin, since it cleaves internal glycosidic bonds of highly methylated pectins. Favors pectate, the anion, over pectin, the methyl ester. The polypeptide is Probable pectate lyase C (plyC) (Aspergillus terreus (strain NIH 2624 / FGSC A1156)).